The chain runs to 722 residues: Pentatricopeptide repeat-containing protein At4g14820 (722 aa).

13 PPR repeats span residues glutamate 75 to leucine 109, aspartate 110 to isoleucine 140, aspartate 145 to arginine 175, aspartate 176 to proline 210, aspartate 211 to methionine 245, aspartate 246 to arginine 276, asparagine 277 to lysine 307, aspartate 308 to proline 342, aspartate 343 to serine 377, glutamate 378 to arginine 408, asparagine 409 to proline 443, asparagine 444 to proline 479, and lysine 480 to valine 514. The tract at residues isoleucine 515–asparagine 590 is type E motif. The tract at residues glycine 591–lysine 621 is type E(+) motif. Residues leucine 622–tryptophan 722 are type DYW motif.

This sequence belongs to the PPR family. PCMP-H subfamily.

In Arabidopsis thaliana (Mouse-ear cress), this protein is Pentatricopeptide repeat-containing protein At4g14820 (PCMP-H3).